Consider the following 534-residue polypeptide: Cytochrome P450 78A9 (534 aa).

Residues 26-46 (LALSLLVASLASLALSLFFWS) traverse the membrane as a helical segment. Cys474 serves as a coordination point for heme.

This sequence belongs to the cytochrome P450 family. Heme is required as a cofactor. As to expression, expressed in the funiculus of developing ovules.

Its subcellular location is the membrane. Functionally, plays a role in seed and fruit development. Functions probably in association with CYP78A6 in the regulation of seed growth. The chain is Cytochrome P450 78A9 (CYP78A9) from Arabidopsis thaliana (Mouse-ear cress).